The chain runs to 214 residues: Large ribosomal subunit protein uL16-like (214 aa).

This sequence belongs to the universal ribosomal protein uL16 family. As to quaternary structure, component of the 60S large ribosomal subunit (LSU).

It is found in the cytoplasm. Functionally, testis-specific component of the ribosome, which is required for the transition from prophase to metaphase in male meiosis I. Compensates for the inactivated X-linked RPL10 paralog during spermatogenesis. The ribosome is a large ribonucleoprotein complex responsible for the synthesis of proteins in the cell. The small ribosomal subunit (SSU) binds messenger RNAs (mRNAs) and translates the encoded message by selecting cognate aminoacyl-transfer RNA (tRNA) molecules. The large subunit (LSU) contains the ribosomal catalytic site termed the peptidyl transferase center (PTC), which catalyzes the formation of peptide bonds, thereby polymerizing the amino acids delivered by tRNAs into a polypeptide chain. The nascent polypeptides leave the ribosome through a tunnel in the LSU and interact with protein factors that function in enzymatic processing, targeting, and the membrane insertion of nascent chains at the exit of the ribosomal tunnel. This is Large ribosomal subunit protein uL16-like (RPL10L) from Bos taurus (Bovine).